The following is a 692-amino-acid chain: Chaperone protein dnaK1 (692 aa).

At threonine 197 the chain carries Phosphothreonine; by autocatalysis.

This sequence belongs to the heat shock protein 70 family.

Its function is as follows. Acts as a chaperone. The protein is Chaperone protein dnaK1 (dnaK1) of Synechocystis sp. (strain ATCC 27184 / PCC 6803 / Kazusa).